The following is a 118-amino-acid chain: Small ribosomal subunit protein uS13 (118 aa).

Residues 94–118 (SLPLRGQRTKTNARTRKGPRKPIKK) are disordered.

It belongs to the universal ribosomal protein uS13 family. In terms of assembly, part of the 30S ribosomal subunit. Forms a loose heterodimer with protein S19. Forms two bridges to the 50S subunit in the 70S ribosome.

Functionally, located at the top of the head of the 30S subunit, it contacts several helices of the 16S rRNA. In the 70S ribosome it contacts the 23S rRNA (bridge B1a) and protein L5 of the 50S subunit (bridge B1b), connecting the 2 subunits; these bridges are implicated in subunit movement. Contacts the tRNAs in the A and P-sites. This is Small ribosomal subunit protein uS13 from Vibrio parahaemolyticus serotype O3:K6 (strain RIMD 2210633).